The chain runs to 286 residues: Bifunctional protein FolD (286 aa).

Residues 165 to 167 (GRS) and serine 190 contribute to the NADP(+) site.

Belongs to the tetrahydrofolate dehydrogenase/cyclohydrolase family. In terms of assembly, homodimer.

It catalyses the reaction (6R)-5,10-methylene-5,6,7,8-tetrahydrofolate + NADP(+) = (6R)-5,10-methenyltetrahydrofolate + NADPH. The enzyme catalyses (6R)-5,10-methenyltetrahydrofolate + H2O = (6R)-10-formyltetrahydrofolate + H(+). It participates in one-carbon metabolism; tetrahydrofolate interconversion. Functionally, catalyzes the oxidation of 5,10-methylenetetrahydrofolate to 5,10-methenyltetrahydrofolate and then the hydrolysis of 5,10-methenyltetrahydrofolate to 10-formyltetrahydrofolate. The polypeptide is Bifunctional protein FolD (Paraburkholderia xenovorans (strain LB400)).